The sequence spans 55 residues: Ribosome modulation factor (55 aa).

This sequence belongs to the ribosome modulation factor family. Associates exclusively with 100S ribosomes.

It is found in the cytoplasm. During stationary phase, converts 70S ribosomes to an inactive dimeric form (100S ribosomes). May form immature 90S particles, which are converted to mature 100S ribosomes by the hibernation promoting factor Hpf. This Escherichia coli O157:H7 protein is Ribosome modulation factor.